We begin with the raw amino-acid sequence, 242 residues long: Probable transcriptional regulatory protein mhp472 (242 aa).

Belongs to the TACO1 family.

Its subcellular location is the cytoplasm. This is Probable transcriptional regulatory protein mhp472 from Mesomycoplasma hyopneumoniae (strain 232) (Mycoplasma hyopneumoniae).